The following is a 589-amino-acid chain: Peptide transporter PTR_A (589 aa).

The interval 1–56 (MSETKPAANDLSNVPSASDSDKDNSLDKVHSLEKTGVHEDINKLPSSDLEQLEDDG) is disordered. A compositionally biased stretch (basic and acidic residues) spans 19–42 (DSDKDNSLDKVHSLEKTGVHEDIN). 4 helical membrane-spanning segments follow: residues 74–95 (IPLSCWLVAIVELAERFSYYGL), 124–144 (ALSYFWQFWCYVTPIFGAWIA), 153–173 (AICIFCGIYLVGILILFITSI), and 180–200 (NTSLGGFIVAIIIIGLGTGGV). N233 carries N-linked (GlcNAc...) asparagine glycosylation. The next 8 helical transmembrane spans lie at 236–256 (IQNVFMFFYLMINIGSLSVIA), 266–286 (FWAGYLLPLCFFCIAPLVLLL), 345–365 (VYACKVFVFYPIYWLVYGQMI), 388–408 (INAITIIIFIPICERFVYPFI), 420–440 (IFWGFMFASSAMVYAGVLQHF), 467–487 (IAIQTPAYFLIGMSEILASIT), 502–522 (SFIMSLFLVTNAFGSAIGIAL), and 533–553 (WTYTGLAVSCFIAGCLFYIIF).

It belongs to the major facilitator superfamily. Proton-dependent oligopeptide transporter (POT/PTR) (TC 2.A.17) family.

The protein localises to the cell membrane. The enzyme catalyses a dipeptide(out) + H(+)(out) = a dipeptide(in) + H(+)(in). The catalysed reaction is an L-amino acid tripeptide(out) + H(+)(out) = an L-amino acid tripeptide(in) + H(+)(in). Functionally, peptide transporter that exploits the inwardly directed proton motive force to facilitate the cellular uptake of di/tripeptides. The protein is Peptide transporter PTR_A of Candidozyma auris (Yeast).